Consider the following 257-residue polypeptide: Global transcriptional regulator CodY (257 aa).

The interval 1 to 155 (MSLLSKTREL…AATVIGMEIL (155 aa)) is GAF domain. The H-T-H motif DNA-binding region spans 203–222 (ASKVADRVGITRSVIVNALR).

It belongs to the CodY family.

It localises to the cytoplasm. Its function is as follows. DNA-binding global transcriptional regulator which is involved in the adaptive response to starvation and acts by directly or indirectly controlling the expression of numerous genes in response to nutrient availability. During rapid exponential growth, CodY is highly active and represses genes whose products allow adaptation to nutrient depletion. The polypeptide is Global transcriptional regulator CodY (Staphylococcus epidermidis (strain ATCC 12228 / FDA PCI 1200)).